Here is a 404-residue protein sequence, read N- to C-terminus: Glucose-1-phosphate adenylyltransferase (404 aa).

Alpha-D-glucose 1-phosphate contacts are provided by residues Tyr99, Gly164, Glu179 to Lys180, and Ser197.

Belongs to the bacterial/plant glucose-1-phosphate adenylyltransferase family. As to quaternary structure, homotetramer.

It catalyses the reaction alpha-D-glucose 1-phosphate + ATP + H(+) = ADP-alpha-D-glucose + diphosphate. The protein operates within glycan biosynthesis; glycogen biosynthesis. Its function is as follows. Involved in the biosynthesis of ADP-glucose, a building block required for the elongation reactions to produce glycogen. Catalyzes the reaction between ATP and alpha-D-glucose 1-phosphate (G1P) to produce pyrophosphate and ADP-Glc. This is Glucose-1-phosphate adenylyltransferase from Nocardia farcinica (strain IFM 10152).